The following is a 121-amino-acid chain: MARIAGVDIPNDKRVVISLTYVYGIGLATSKKILAAAGVSEDIRVKDLTSDQEDAIRREVDTIKVEGDLRREVNLNIKRLMEIGSYRGIRHRRGLPVRGQNTKNNARTRKGKAVAIAGKKK.

A disordered region spans residues 95–121 (LPVRGQNTKNNARTRKGKAVAIAGKKK). Basic residues predominate over residues 106–121 (ARTRKGKAVAIAGKKK).

It belongs to the universal ribosomal protein uS13 family. As to quaternary structure, part of the 30S ribosomal subunit. Forms a loose heterodimer with protein S19. Forms two bridges to the 50S subunit in the 70S ribosome.

Functionally, located at the top of the head of the 30S subunit, it contacts several helices of the 16S rRNA. In the 70S ribosome it contacts the 23S rRNA (bridge B1a) and protein L5 of the 50S subunit (bridge B1b), connecting the 2 subunits; these bridges are implicated in subunit movement. Contacts the tRNAs in the A and P-sites. The polypeptide is Small ribosomal subunit protein uS13 (Streptococcus equi subsp. zooepidemicus (strain H70)).